The following is a 380-amino-acid chain: Reducing-end xylose-releasing exo-oligoxylanase Rex8A (380 aa).

The Proton donor role is filled by Glu70. The active-site Proton acceptor is the Asp265.

Belongs to the glycosyl hydrolase 8 (cellulase D) family.

The enzyme catalyses Hydrolysis of (1-&gt;4)-beta-D-xylose residues from the reducing end of oligosaccharides.. It functions in the pathway glycan degradation; xylan degradation. In terms of biological role, involved in depolymerization of xylan, a major component of the lignocellulosic substrates. Acts as an exo-oligoxylanase that efficiently hydrolyzes xylooligosaccharides, releasing xylose from their reducing ends. Hydrolyzes xylooligomers of 3 to 6 xylose units to xylose and xylobiose. Besides linear xylooligosaccharides, also hydrolyzes branched xylooligomers, such as xylooligomers decorated with 4-O-methyl-D-glucuronic acid moieties. Its proposed role is the degradation of xylooligomers produced by the activity of extracellular xylanases once they have been transported inside cells. Shows minor activity on polymeric xylan (glucuronoxylan from beechwood). Is not active on cellooligosaccharides or cellulosic substrates, or on other polysaccharides such as pectin, polygalacturonic acid, laminarin, or lichenan. The protein is Reducing-end xylose-releasing exo-oligoxylanase Rex8A of Paenibacillus barcinonensis.